The sequence spans 192 residues: Erythropoietin (192 aa).

An N-terminal signal peptide occupies residues 1–27; that stretch reads MGVHECPAWLWLLLSLVSLPLGLPVPG. 2 cysteine pairs are disulfide-bonded: cysteine 34/cysteine 187 and cysteine 56/cysteine 60. Asparagine 51 carries an N-linked (GlcNAc...) asparagine glycan. 2 N-linked (GlcNAc...) asparagine glycosylation sites follow: asparagine 65 and asparagine 110. Residue serine 152 is glycosylated (O-linked (GalNAc...) serine).

This sequence belongs to the EPO/TPO family. Produced by kidney or liver of adult mammals and by liver of fetal or neonatal mammals.

It is found in the secreted. In terms of biological role, hormone involved in the regulation of erythrocyte proliferation and differentiation and the maintenance of a physiological level of circulating erythrocyte mass. Binds to EPOR leading to EPOR dimerization and JAK2 activation thereby activating specific downstream effectors, including STAT1 and STAT3. This chain is Erythropoietin (EPO), found in Macaca mulatta (Rhesus macaque).